Consider the following 433-residue polypeptide: Bifunctional protein GlmU (433 aa).

The segment at 1-226 is pyrophosphorylase; sequence MLSVIILAAG…EECFLGVNSQ (226 aa). Residues 7-10, K21, and 80-81 each bind UDP-N-acetyl-alpha-D-glucosamine; these read LAAG and GT. D106 contributes to the Mg(2+) binding site. UDP-N-acetyl-alpha-D-glucosamine-binding residues include G138, E152, N167, and N224. A Mg(2+)-binding site is contributed by N224. Positions 227 to 247 are linker; the sequence is TERAKAEEIMLERLRKNAMDL. The interval 248–433 is N-acetyltransferase; that stretch reads GVVMQLPNSI…NGYFKFFKKP (186 aa). Residues R311 and K328 each contribute to the UDP-N-acetyl-alpha-D-glucosamine site. H339 acts as the Proton acceptor in catalysis. 2 residues coordinate UDP-N-acetyl-alpha-D-glucosamine: Y342 and N353. Acetyl-CoA contacts are provided by residues A356, 362–363, S381, S399, and R416; that span reads NY.

In the N-terminal section; belongs to the N-acetylglucosamine-1-phosphate uridyltransferase family. This sequence in the C-terminal section; belongs to the transferase hexapeptide repeat family. As to quaternary structure, homotrimer. Mg(2+) serves as cofactor.

It is found in the cytoplasm. The catalysed reaction is alpha-D-glucosamine 1-phosphate + acetyl-CoA = N-acetyl-alpha-D-glucosamine 1-phosphate + CoA + H(+). It catalyses the reaction N-acetyl-alpha-D-glucosamine 1-phosphate + UTP + H(+) = UDP-N-acetyl-alpha-D-glucosamine + diphosphate. It participates in nucleotide-sugar biosynthesis; UDP-N-acetyl-alpha-D-glucosamine biosynthesis; N-acetyl-alpha-D-glucosamine 1-phosphate from alpha-D-glucosamine 6-phosphate (route II): step 2/2. The protein operates within nucleotide-sugar biosynthesis; UDP-N-acetyl-alpha-D-glucosamine biosynthesis; UDP-N-acetyl-alpha-D-glucosamine from N-acetyl-alpha-D-glucosamine 1-phosphate: step 1/1. Its pathway is bacterial outer membrane biogenesis; LPS lipid A biosynthesis. Catalyzes the last two sequential reactions in the de novo biosynthetic pathway for UDP-N-acetylglucosamine (UDP-GlcNAc). The C-terminal domain catalyzes the transfer of acetyl group from acetyl coenzyme A to glucosamine-1-phosphate (GlcN-1-P) to produce N-acetylglucosamine-1-phosphate (GlcNAc-1-P), which is converted into UDP-GlcNAc by the transfer of uridine 5-monophosphate (from uridine 5-triphosphate), a reaction catalyzed by the N-terminal domain. In Helicobacter pylori (strain ATCC 700392 / 26695) (Campylobacter pylori), this protein is Bifunctional protein GlmU.